Reading from the N-terminus, the 181-residue chain is Small ribosomal subunit protein uS4 (181 aa).

The S4 RNA-binding domain occupies 108–180 (RRLQTIVYRK…GERQRIMNQR (73 aa)).

The protein belongs to the universal ribosomal protein uS4 family. As to quaternary structure, part of the 30S ribosomal subunit. Contacts protein S5. The interaction surface between S4 and S5 is involved in control of translational fidelity.

One of the primary rRNA binding proteins, it binds directly to 16S rRNA where it nucleates assembly of the body of the 30S subunit. Its function is as follows. With S5 and S12 plays an important role in translational accuracy. The polypeptide is Small ribosomal subunit protein uS4 (Methanocorpusculum labreanum (strain ATCC 43576 / DSM 4855 / Z)).